A 422-amino-acid chain; its full sequence is Nucleoside transporter 1 (422 aa).

At 1–38 (MSTGKESSKAYADIESRGDYKDDGKKGSTLSSKQHFML) the chain is on the cytoplasmic side. The helical transmembrane segment at 39–59 (SLTFILIGLSSLNVWNTALGL) threads the bilayer. Trp53 is a binding site for inosine. Residues 60-63 (NINF) are Extracellular-facing. Residues 64 to 82 (KYNTFQITGLVCSSIVALF) traverse the membrane as a helical segment. The Cytoplasmic segment spans residues 83–87 (VEIPK). Residues 88–107 (IMLPFLLGGLSILCAGFQIS) traverse the membrane as a helical segment. Residues 108–116 (HSFFTDTQF) are Extracellular-facing. The helical transmembrane segment at 117–139 (DTYCLVAFIVIGVVAGLAQTIAF) threads the bilayer. Gln135 is a binding site for inosine. Topologically, residues 140–149 (NIGSTMEDNM) are cytoplasmic. The chain crosses the membrane as a helical span at residues 150–174 (GGYMSAGIGISGVFIFVINLLLDQF). At 175-185 (VSPEKHYGVNK) the chain is on the extracellular side. A helical transmembrane segment spans residues 186 to 208 (AKLLYLYIICELCLILAIVFCVC). Residues 209 to 241 (NLDLTNKNNKKDEENKENNATLSYMELFKDSYK) are Cytoplasmic-facing. The chain crosses the membrane as a helical span at residues 242–265 (AILTMFLVNWLTLQLFPGVGHKKW). Over 266–274 (QESHNISDY) the chain is Extracellular. A helical transmembrane segment spans residues 275–294 (NVTIIVGMFQVFDFLSRYPP). Residues Asp287 and Arg291 each coordinate inosine. The Cytoplasmic segment spans residues 295–309 (NLTHIKIFKNFTFSL). A helical transmembrane segment spans residues 310–330 (NKLLVANSLRLLFIPWFILNA). At 331 to 338 (CVDHPFFK) the chain is on the extracellular side. The chain crosses the membrane as a helical span at residues 339–362 (NIVQQCVCMAMLAFTNGWFNTVPF). Topologically, residues 363–374 (LVFVKELKKAKK) are cytoplasmic. A helical transmembrane segment spans residues 375 to 397 (KKEIEIISTFLVIAMFVGLFCGI). Topologically, residues 398 to 422 (WTTYIYNLFNIVLPKPDLPPIDVTQ) are extracellular.

It belongs to the SLC29A/ENT transporter (TC 2.A.57) family.

It is found in the cell membrane. The catalysed reaction is inosine(in) = inosine(out). It catalyses the reaction adenosine(in) = adenosine(out). It carries out the reaction hypoxanthine(out) = hypoxanthine(in). The enzyme catalyses guanosine(in) = guanosine(out). The catalysed reaction is guanine(out) = guanine(in). It catalyses the reaction thymidine(in) = thymidine(out). It carries out the reaction uridine(out) = uridine(in). The enzyme catalyses uracil(in) = uracil(out). The catalysed reaction is thymine(out) = thymine(in). It catalyses the reaction adenine(out) = adenine(in). It carries out the reaction cytosine(out) = cytosine(in). The enzyme catalyses xanthine(out) = xanthine(in). Its activity is regulated as follows. GSK4 (5-methyl-N-[2-(2-oxo-1-azepanyl)ethyl]-2-phenyl-1,3-oxazole-4-carbox-amide) disrupts the transport activity at 500 nM. Inhibited partially by 10 uM dipyridamole. Inhibited partially by N,N'-1,3-benzothiazole-2,6-diyldi(2-furamide), 2-bromo-N-(4-[1,3]oxazolo[4,5-b]pyridin-2-ylphenyl)benzamide, 4-methyl-7-[(3,4,5-trimethoxybenzyl)oxy]-2H-chromen-2-one, 2-(1-methyl-1H-indol-3-yl)-2-oxo-N-[4-(pyrrolidin-1-ylcarbonyl)phenyl]acet amide and 2-[2-(2-methylphenyl)vinyl]-4(3H)-quinazolinone. Its function is as follows. Sodium-independent nucleoside and nucleobase transporter with a broad substrate specificity. Plays a key role in the utilization of host purine sources by P.falciparum during intraerythrocytic development enabling parasite growth in the presence of physiological concentrations of adenosine, inosine, guanine, guanosine, xanthine and hypoxanthine. Essential for parasite transition from ring to trophozoite or from trophozoite to schizont stage but not for erythrocyte invasion by merozoites. The chain is Nucleoside transporter 1 from Plasmodium falciparum (isolate 3D7).